The sequence spans 322 residues: Atrochrysone carboxyl ACP thioesterase nsrC (322 aa).

Zn(2+) contacts are provided by His-105, His-107, Asp-109, and His-110. Asp-109 (proton donor/acceptor) is an active-site residue.

The protein belongs to the metallo-beta-lactamase superfamily. Zn(2+) serves as cofactor.

The catalysed reaction is atrochrysone carboxyl-[ACP] + H2O = atrochrysone carboxylate + holo-[ACP] + H(+). Its pathway is secondary metabolite biosynthesis. Functionally, atrochrysone carboxyl ACP thioesterase; part of the gene cluster that mediates the biosynthesis of the tetrahydroxanthone dimer neosartorin, which exhibits antibacterial activity. The two different monomeric units appear to be synthesized by the same set of enzymes, among which the Baeyer-Villiger monooxygenase nsrF is the key enzyme for the divergence of the biosynthetic routes. The pathway begins with the synthesis of atrochrysone thioester by the polyketide synthase nsrB. The atrochrysone carboxyl ACP thioesterase nsrC then breaks the thioester bond and releases the atrochrysone carboxylic acid from AacuL. Atrochrysone carboxylic acid is decarboxylated by the decarboxylase nsrE, and oxidized by the anthrone oxygenase nsrD to yield emodin. Emodin is then reduced to emodin hydroquinone by the oxidoreductase nsrR. A-ring reduction by the short chain dehydrogenase nsrJ, dehydration by the scytalone dehydratase-like protein nsrI and probable spontaneous re-oxidation, results in overall deoxygenation to chrysophanol. The Baeyer-Villiger monooxygenase nsrF accepts chrysophanol as a substrate to insert one oxygen atom at two different positions to yield the precursors of both monomric units. NsrF is promiscuous/flexible in interacting with the 2 (non methylated and methylated) aromatic rings of chrysophanol, thus diverging the biosynthetic pathway at this point. After the hydrolysis of the lactones, methylesterification by the methyltransferase nsrG yields respectively moniliphenone and 2,2',6'-trihydroxy-4-methyl-6-methoxya-cyldiphenylmethanone. The next steps are the hydroxylation by the FAD-dependent monooxygenase nsrK, followed by isomerization by the monooxygenase nsrQ. The short chain dehydrogenase/reductase nsrO then catalyzes the C-5 ketoreduction to give the xanthone skeleton of blennolide C and 5-acetylblennolide A. The acetyltransferase nsrL has a strict substrate specificity and uses only blennolide A but not blennolide C to yield 5-acetylblennolide A as the single-acetylated product. In the final step of the biosynthesis, the heterodimerization of the 2 xanthones, blennolide C and 5-acetylblennolide A, is catalyzed by the cytochrome P450 monooxygenase nsrP. NsrP can utilize at least three different xanthones as its substrates to perform the dimerization reaction. The protein is Atrochrysone carboxyl ACP thioesterase nsrC of Aspergillus novofumigatus (strain IBT 16806).